Here is a 202-residue protein sequence, read N- to C-terminus: Small ribosomal subunit protein uS4 (202 aa).

A compositionally biased stretch (basic residues) spans Met1–Arg13. Residues Met1–Arg42 form a disordered region. The S4 RNA-binding domain occupies Asn90–Asn152.

It belongs to the universal ribosomal protein uS4 family. As to quaternary structure, part of the 30S ribosomal subunit. Contacts protein S5. The interaction surface between S4 and S5 is involved in control of translational fidelity.

Its function is as follows. One of the primary rRNA binding proteins, it binds directly to 16S rRNA where it nucleates assembly of the body of the 30S subunit. With S5 and S12 plays an important role in translational accuracy. In Prochlorococcus marinus subsp. pastoris (strain CCMP1986 / NIES-2087 / MED4), this protein is Small ribosomal subunit protein uS4.